A 910-amino-acid polypeptide reads, in one-letter code: Protein translocase subunit SecA (910 aa).

Residues Gln86, 104–108 (GEGKT), and Asp499 each bind ATP. Zn(2+)-binding residues include Cys894, Cys896, Cys905, and His906.

The protein belongs to the SecA family. In terms of assembly, monomer and homodimer. Part of the essential Sec protein translocation apparatus which comprises SecA, SecYEG and auxiliary proteins SecDF-YajC and YidC. The cofactor is Zn(2+).

It localises to the cell inner membrane. Its subcellular location is the cytoplasm. The enzyme catalyses ATP + H2O + cellular proteinSide 1 = ADP + phosphate + cellular proteinSide 2.. Its function is as follows. Part of the Sec protein translocase complex. Interacts with the SecYEG preprotein conducting channel. Has a central role in coupling the hydrolysis of ATP to the transfer of proteins into and across the cell membrane, serving both as a receptor for the preprotein-SecB complex and as an ATP-driven molecular motor driving the stepwise translocation of polypeptide chains across the membrane. The sequence is that of Protein translocase subunit SecA from Rickettsia bellii (strain RML369-C).